A 71-amino-acid chain; its full sequence is Ubiquinol-cytochrome c reductase complex assembly factor 6 (71 aa).

The Mitochondrial matrix portion of the chain corresponds to 1 to 8; the sequence is MPAGVPMS. A helical; Signal-anchor for type II membrane protein transmembrane segment spans residues 9–25; it reads TYLKMFAASLLAMCAGA. Topologically, residues 26–71 are mitochondrial intermembrane; sequence EVVHRYYRPDLTIPEIPPKRGELKTELLGLKERKHKPQVSQQEELK.

It belongs to the UQCC6 family. Interacts with UQCRC1. Interacts with UQCRQ. Interacts with UQCC5. Forms a complex, named COMB/coordinator of mitochondrial CYTB biogenesis, composed of UQCC1, UQCC2, UQCC4, UQCC5 and UQCC6; stabilizes nascent cytochrome b/MT-CYB and promotes its membrane insertion. Forms a complex, named COMA, composed of UQCC1, UQCC2 and UQCC4; activates MT-CYB translation. Forms a complex, named COMC, composed of UQCC1, UQCC2; UQCC3 and UQCC4; mediates MT-CYB hemylation and association with the first nuclear-encoded complex III subunit UQCRQ. Interacts with MT-CYB. In terms of tissue distribution, cardiac and skeletal muscle (at protein level).

The protein localises to the mitochondrion inner membrane. In terms of biological role, required for the assembly and stability of the mitochondrial ubiquinol-cytochrome c reductase complex (complex III (CIII) or cytochrome b-c1 complex), a multisubunit transmembrane complex that is part of the mitochondrial electron transport chain (ETC) which drives oxidative phosphorylation. Mediates early complex III biogenesis. Participates in regulating the levels of electron transport chain proteins, and therefore energy supply, in response to changes in energy demand. Also required for cytochrome c oxidase complex (complex IV) assembly. This chain is Ubiquinol-cytochrome c reductase complex assembly factor 6, found in Homo sapiens (Human).